The sequence spans 365 residues: tRNA/tmRNA (uracil-C(5))-methyltransferase (365 aa).

The S-adenosyl-L-methionine site is built by Gln196, Tyr224, Asn229, Glu245, and Asp298. The active-site Nucleophile is Cys323. The active-site Proton acceptor is Glu357.

The protein belongs to the class I-like SAM-binding methyltransferase superfamily. RNA M5U methyltransferase family. TrmA subfamily.

It catalyses the reaction uridine(54) in tRNA + S-adenosyl-L-methionine = 5-methyluridine(54) in tRNA + S-adenosyl-L-homocysteine + H(+). The catalysed reaction is uridine(341) in tmRNA + S-adenosyl-L-methionine = 5-methyluridine(341) in tmRNA + S-adenosyl-L-homocysteine + H(+). In terms of biological role, dual-specificity methyltransferase that catalyzes the formation of 5-methyluridine at position 54 (m5U54) in all tRNAs, and that of position 341 (m5U341) in tmRNA (transfer-mRNA). The sequence is that of tRNA/tmRNA (uracil-C(5))-methyltransferase from Nautilia profundicola (strain ATCC BAA-1463 / DSM 18972 / AmH).